The following is a 316-amino-acid chain: Dehydrogenase/reductase SDR family protein 7-like (316 aa).

At 1 to 18 the chain is on the cytoplasmic side; the sequence is MFFYKIIYFIGFPYIVLR. Residues 19–39 traverse the membrane as a helical; Signal-anchor for type II membrane protein segment; the sequence is LIVSIILPIASLYFIYCNFIA. Residues 40 to 316 are Peroxisomal-facing; the sequence is PKLREKPESS…HKFASSSVKK (277 aa). Residue 56–80 coordinates NAD(+); the sequence is IITGASSGIGAELAKKYARLGCKVT. Ser194 contributes to the substrate binding site. Tyr207 (proton acceptor) is an active-site residue.

The protein belongs to the short-chain dehydrogenases/reductases (SDR) family.

The protein localises to the peroxisome membrane. Functionally, putative oxidoreductase. The sequence is that of Dehydrogenase/reductase SDR family protein 7-like from Dictyostelium discoideum (Social amoeba).